The primary structure comprises 90 residues: Small ribosomal subunit protein uS15 (90 aa).

Belongs to the universal ribosomal protein uS15 family. In terms of assembly, part of the 30S ribosomal subunit. Forms a bridge to the 50S subunit in the 70S ribosome, contacting the 23S rRNA.

Its function is as follows. One of the primary rRNA binding proteins, it binds directly to 16S rRNA where it helps nucleate assembly of the platform of the 30S subunit by binding and bridging several RNA helices of the 16S rRNA. Forms an intersubunit bridge (bridge B4) with the 23S rRNA of the 50S subunit in the ribosome. The protein is Small ribosomal subunit protein uS15 of Helicobacter pylori (strain HPAG1).